The following is a 1801-amino-acid chain: U3 small nucleolar RNA-associated protein 10 (1801 aa).

The HEAT 1 repeat unit spans residues 582–619 (IDFQALVPFVLVALGDVSERIRREAAAVLAALGALYKK). Helical transmembrane passes span 945-965 (IQSG…AIVN) and 1001-1021 (ALLL…HSVM). HEAT repeat units lie at residues 1045 to 1082 (QTID…AFEH), 1252 to 1289 (LSLI…QNPE), 1296 to 1334 (NRML…KYGK), and 1757 to 1794 (ALLP…VLGE).

The protein belongs to the HEATR1/UTP10 family. Component of the ribosomal small subunit (SSU) processome.

It localises to the nucleus. It is found in the nucleolus. The protein localises to the membrane. Functionally, involved in nucleolar processing of pre-18S ribosomal RNA. Involved in ribosome biosynthesis. This is U3 small nucleolar RNA-associated protein 10 from Aspergillus terreus (strain NIH 2624 / FGSC A1156).